A 549-amino-acid polypeptide reads, in one-letter code: MKRVLTALAAALPFAAHAADAISGAVERQPTNWQAIIMFLIFVVFTLGITYWASKRVRSRSDYYTAGGNITGFQNGLAIAGDYMSAASFLGISALVFTSGYDGLIYSLGFLVGWPIILFLIAERLRNLGRYTFADVASYRLKQGPIRILSACGSLVVVALYLIAQMVGAGKLIELLFGLNYHIAVVLVGVLMMMYVLFGGMLATTWVQIIKAVLLLFGASFMAFMVMKHVGFSFNNLFTEAMAVHPKGTAIMSPGGLVQDPISALSLGLGLMFGTAGLPHILMRFFTVSDAREARKSVFYATGFMGYFYILTFIIGFGAIMLVGANPAYKDAAGALIGGNNMAAVHLANAVGGNLFLGFISAVAFATILAVVAGLTLAGASAVSHDLYANVFRKGATEREELKVSKITVLVLGVIAIILGFLFENQNIAFMVGLAFAIAASCNFPIILLSMYWSKLTTRGAMLGGWLGLLTAVVLMILGPTIWVQILGHEKAIFPYEYPALFSISVAFLGIWFFSATDNSAEGNREREQFRAQFIRSQTGFGVQQGRAH.

A run of 13 helical transmembrane segments spans residues 33 to 53 (WQAI…TYWA), 77 to 97 (LAIA…ALVF), 103 to 123 (GLIY…LIAE), 148 to 168 (ILSA…QMVG), 183 to 203 (IAVV…GMLA), 206 to 226 (WVQI…AFMV), 262 to 282 (ISAL…PHIL), 303 to 323 (GFMG…IMLV), 355 to 375 (LFLG…VAGL), 404 to 424 (VSKI…FLFE), 428 to 448 (IAFM…PIIL), 464 to 484 (GGWL…TIWV), and 493 to 513 (IFPY…GIWF).

It belongs to the sodium:solute symporter (SSF) (TC 2.A.21) family.

It localises to the cell inner membrane. Transports acetate. The polypeptide is Cation/acetate symporter ActP (Salmonella paratyphi C (strain RKS4594)).